The sequence spans 615 residues: Putative binding protein BRA0576/BS1330_II0571 (615 aa).

Residues 1–29 (MLNRFIAFFRSVFLIGLVATAFGALPARA) form the signal peptide.

This sequence belongs to the bacterial solute-binding protein 5 family.

The protein resides in the periplasm. The polypeptide is Putative binding protein BRA0576/BS1330_II0571 (Brucella suis biovar 1 (strain 1330)).